Here is a 152-residue protein sequence, read N- to C-terminus: Nucleoside diphosphate kinase (152 aa).

ATP-binding residues include Lys-10, Phe-58, Arg-86, Thr-92, Arg-103, and Asn-113. The Pros-phosphohistidine intermediate role is filled by His-116.

It belongs to the NDK family. Mg(2+) serves as cofactor.

It is found in the cytoplasm. It catalyses the reaction a 2'-deoxyribonucleoside 5'-diphosphate + ATP = a 2'-deoxyribonucleoside 5'-triphosphate + ADP. The catalysed reaction is a ribonucleoside 5'-diphosphate + ATP = a ribonucleoside 5'-triphosphate + ADP. Major role in the synthesis of nucleoside triphosphates other than ATP. The ATP gamma phosphate is transferred to the NDP beta phosphate via a ping-pong mechanism, using a phosphorylated active-site intermediate. The polypeptide is Nucleoside diphosphate kinase (Methanosphaera stadtmanae (strain ATCC 43021 / DSM 3091 / JCM 11832 / MCB-3)).